Reading from the N-terminus, the 162-residue chain is Peroxiredoxin-2D (162 aa).

Positions 4–162 (ITVGDVVPDG…SSAEDILKAL (159 aa)) constitute a Thioredoxin domain. The Cysteine sulfenic acid (-SOH) intermediate role is filled by cysteine 51.

It belongs to the peroxiredoxin family. Prx5 subfamily. As to quaternary structure, monomer. Exclusively expressed in buds and flowers. Also detected in pollen.

It localises to the cytoplasm. It carries out the reaction [glutaredoxin]-dithiol + a hydroperoxide = [glutaredoxin]-disulfide + an alcohol + H2O. Functionally, thiol-specific peroxidase that catalyzes the reduction of hydrogen peroxide and organic hydroperoxides to water and alcohols, respectively. Plays a role in cell protection against oxidative stress by detoxifying peroxides. May be involved in intracellular redox signaling. The chain is Peroxiredoxin-2D (PRXIID) from Arabidopsis thaliana (Mouse-ear cress).